The following is a 350-amino-acid chain: FAD:protein FMN transferase (350 aa).

A signal peptide spans 1-19 (MDMTFFRAALLGACVLLSG). The N-palmitoyl cysteine moiety is linked to residue Cys-20. Residue Cys-20 is the site of S-diacylglycerol cysteine attachment. FAD is bound by residues Met-41, Trp-78, 119–121 (AMD), and Asp-181. Thr-184 contributes to the Mg(2+) binding site. Residues Glu-187 and Ile-272 each coordinate FAD. Residues Asp-298, Asp-301, and Thr-302 each coordinate Mg(2+).

Belongs to the ApbE family. Requires Mg(2+) as cofactor.

The protein localises to the cell inner membrane. It catalyses the reaction L-threonyl-[protein] + FAD = FMN-L-threonyl-[protein] + AMP + H(+). In terms of biological role, flavin transferase that catalyzes the transfer of the FMN moiety of FAD and its covalent binding to the hydroxyl group of a threonine residue in a target flavoprotein such as NqrB and NqrC, two subunits of the NQR complex. This chain is FAD:protein FMN transferase, found in Klebsiella pneumoniae (strain 342).